Consider the following 478-residue polypeptide: Putative indole-3-acetic acid-amido synthetase GH3.10 (478 aa).

It belongs to the IAA-amido conjugating enzyme family.

May catalyze the synthesis of indole-3-acetic acid (IAA)-amino acid conjugates, providing a mechanism for the plant to cope with the presence of excess auxin. The sequence is that of Putative indole-3-acetic acid-amido synthetase GH3.10 (GH3.10) from Oryza sativa subsp. japonica (Rice).